The following is a 346-amino-acid chain: Putative cytochrome bd menaquinol oxidase subunit II (346 aa).

Helical transmembrane passes span 7-27 (ALIA…MATM), 63-83 (VFIV…TFVL), 87-107 (LLIP…FLVF), 119-139 (YISG…LPVT), 164-184 (AYSF…LLLA), 201-221 (KSAL…MVTM), 236-256 (FSWI…LFLP), 269-289 (LALV…GRAH), and 312-332 (ALFA…FFFW).

It belongs to the cytochrome ubiquinol oxidase subunit 2 family.

The protein resides in the cell membrane. In terms of biological role, may have a role in sporulation. Can compensate for the loss of cytochrome aa3. The chain is Putative cytochrome bd menaquinol oxidase subunit II (ythB) from Bacillus subtilis (strain 168).